A 162-amino-acid polypeptide reads, in one-letter code: AP-1 complex subunit sigma-1 (162 aa).

The protein belongs to the adaptor complexes small subunit family. In terms of assembly, adaptor protein complex 1 (AP-1) is a heterotetramer composed of two large adaptins (gamma-type subunit apl4 and beta-type subunit apl2), a medium adaptin (mu-type subunit apm1) and a small adaptin (sigma-type subunit aps1). AP-1 interacts with clathrin.

It is found in the cytoplasm. Its subcellular location is the nucleus. The protein resides in the cytoplasmic vesicle. It localises to the clathrin-coated vesicle membrane. The protein localises to the endosome. It is found in the golgi apparatus. In terms of biological role, component of the AP-1 complex which links clathrin to receptors in coated vesicles. Clathrin-associated protein complexes are believed to interact with the cytoplasmic tails of membrane proteins, leading to their selection and concentration. In Schizosaccharomyces pombe (strain 972 / ATCC 24843) (Fission yeast), this protein is AP-1 complex subunit sigma-1 (vas2).